The chain runs to 31 residues: Cyclotide cter-D (31 aa).

Positions 1 to 31 (GIPCAESCVWIPCTVTALLGCSCKDKVCYLN) form a cross-link, cyclopeptide (Gly-Asn). 3 disulfides stabilise this stretch: Cys4/Cys21, Cys8/Cys23, and Cys13/Cys28.

In terms of processing, contains 3 disulfide bonds. This is a cyclic peptide. As to expression, expressed in root, seed and nodule but not in flower, stem, shoot, leaf and pod.

In terms of biological role, probably participates in a plant defense mechanism. The polypeptide is Cyclotide cter-D (Clitoria ternatea (Butterfly pea)).